A 361-amino-acid polypeptide reads, in one-letter code: tRNA-specific 2-thiouridylase MnmA (361 aa).

ATP-binding positions include 8 to 15 and M35; that span reads AMSGGVDS. The tract at residues 95–97 is interaction with target base in tRNA; sequence NPD. Catalysis depends on C100, which acts as the Nucleophile. Residues C100 and C196 are joined by a disulfide bond. G124 serves as a coordination point for ATP. The interaction with tRNA stretch occupies residues 146-148; it reads KDQ. C196 functions as the Cysteine persulfide intermediate in the catalytic mechanism. The tract at residues 303 to 304 is interaction with tRNA; sequence RY.

It belongs to the MnmA/TRMU family.

The protein resides in the cytoplasm. The catalysed reaction is S-sulfanyl-L-cysteinyl-[protein] + uridine(34) in tRNA + AH2 + ATP = 2-thiouridine(34) in tRNA + L-cysteinyl-[protein] + A + AMP + diphosphate + H(+). Catalyzes the 2-thiolation of uridine at the wobble position (U34) of tRNA, leading to the formation of s(2)U34. The chain is tRNA-specific 2-thiouridylase MnmA from Chlamydia felis (strain Fe/C-56) (Chlamydophila felis).